The chain runs to 337 residues: tRNA-dihydrouridine synthase B (337 aa).

FMN contacts are provided by residues 19–21 (PMA) and glutamine 73. Catalysis depends on cysteine 103, which acts as the Proton donor. Residues lysine 142, 203–205 (NGD), and 227–228 (GR) contribute to the FMN site.

The protein belongs to the Dus family. DusB subfamily. FMN is required as a cofactor.

The enzyme catalyses a 5,6-dihydrouridine in tRNA + NAD(+) = a uridine in tRNA + NADH + H(+). The catalysed reaction is a 5,6-dihydrouridine in tRNA + NADP(+) = a uridine in tRNA + NADPH + H(+). Functionally, catalyzes the synthesis of 5,6-dihydrouridine (D), a modified base found in the D-loop of most tRNAs, via the reduction of the C5-C6 double bond in target uridines. In Pseudomonas putida (strain ATCC 47054 / DSM 6125 / CFBP 8728 / NCIMB 11950 / KT2440), this protein is tRNA-dihydrouridine synthase B.